The following is a 271-amino-acid chain: Phosphonoacetaldehyde hydrolase (271 aa).

The Nucleophile role is filled by Asp-12. Mg(2+) is bound by residues Asp-12 and Ala-14. Lys-54 serves as the catalytic Schiff-base intermediate with substrate. Residue Asp-188 participates in Mg(2+) binding.

It belongs to the HAD-like hydrolase superfamily. PhnX family. As to quaternary structure, homodimer. Requires Mg(2+) as cofactor.

The catalysed reaction is phosphonoacetaldehyde + H2O = acetaldehyde + phosphate + H(+). Functionally, involved in phosphonate degradation. The chain is Phosphonoacetaldehyde hydrolase from Aliivibrio salmonicida (strain LFI1238) (Vibrio salmonicida (strain LFI1238)).